Here is a 150-residue protein sequence, read N- to C-terminus: SsrA-binding protein (150 aa).

Belongs to the SmpB family.

Its subcellular location is the cytoplasm. In terms of biological role, required for rescue of stalled ribosomes mediated by trans-translation. Binds to transfer-messenger RNA (tmRNA), required for stable association of tmRNA with ribosomes. tmRNA and SmpB together mimic tRNA shape, replacing the anticodon stem-loop with SmpB. tmRNA is encoded by the ssrA gene; the 2 termini fold to resemble tRNA(Ala) and it encodes a 'tag peptide', a short internal open reading frame. During trans-translation Ala-aminoacylated tmRNA acts like a tRNA, entering the A-site of stalled ribosomes, displacing the stalled mRNA. The ribosome then switches to translate the ORF on the tmRNA; the nascent peptide is terminated with the 'tag peptide' encoded by the tmRNA and targeted for degradation. The ribosome is freed to recommence translation, which seems to be the essential function of trans-translation. This Rubrobacter xylanophilus (strain DSM 9941 / JCM 11954 / NBRC 16129 / PRD-1) protein is SsrA-binding protein.